A 433-amino-acid polypeptide reads, in one-letter code: Enolase (433 aa).

Gln-167 contacts (2R)-2-phosphoglycerate. Glu-209 serves as the catalytic Proton donor. A Mg(2+)-binding site is contributed by Asp-246. Residues 252 to 260 (FYDAEKKEY) carry the Plasminogen-binding motif motif. 2 residues coordinate Mg(2+): Glu-291 and Asp-318. 4 residues coordinate (2R)-2-phosphoglycerate: Lys-343, Arg-372, Ser-373, and Lys-394. Lys-343 serves as the catalytic Proton acceptor.

The protein belongs to the enolase family. Component of the RNA degradosome, a multiprotein complex involved in RNA processing and mRNA degradation. The cofactor is Mg(2+).

It localises to the cell inner membrane. The protein resides in the cell outer membrane. It is found in the cytoplasm. Its subcellular location is the secreted. The protein localises to the cell surface. It catalyses the reaction (2R)-2-phosphoglycerate = phosphoenolpyruvate + H2O. Its pathway is carbohydrate degradation; glycolysis; pyruvate from D-glyceraldehyde 3-phosphate: step 4/5. Its function is as follows. Catalyzes the reversible conversion of 2-phosphoglycerate (2-PG) into phosphoenolpyruvate (PEP). It is essential for the degradation of carbohydrates via glycolysis. 'Moonlights' as a plasminogen receptor and plasmin activator. Binds host (human) plasminogen in vitro. Binds human plasmin and plasminogen on the cell surface; enhances the activity of host tissue-specific plasminogen activator (tPA). Plasmin bound to bacteria is partially protected from its physiological inhibitor alpha-2AP (SERPINF2). The polypeptide is Enolase (Aeromonas hydrophila).